A 387-amino-acid chain; its full sequence is Chorismate synthase (387 aa).

NADP(+) contacts are provided by Arg40 and Arg46. Residues 129-131 (RSS), 250-251 (QA), Gly295, 310-314 (KPIPT), and Arg336 each bind FMN.

It belongs to the chorismate synthase family. As to quaternary structure, homotetramer. FMNH2 is required as a cofactor.

It catalyses the reaction 5-O-(1-carboxyvinyl)-3-phosphoshikimate = chorismate + phosphate. The protein operates within metabolic intermediate biosynthesis; chorismate biosynthesis; chorismate from D-erythrose 4-phosphate and phosphoenolpyruvate: step 7/7. Functionally, catalyzes the anti-1,4-elimination of the C-3 phosphate and the C-6 proR hydrogen from 5-enolpyruvylshikimate-3-phosphate (EPSP) to yield chorismate, which is the branch point compound that serves as the starting substrate for the three terminal pathways of aromatic amino acid biosynthesis. This reaction introduces a second double bond into the aromatic ring system. The sequence is that of Chorismate synthase from Desulforamulus reducens (strain ATCC BAA-1160 / DSM 100696 / MI-1) (Desulfotomaculum reducens).